The primary structure comprises 138 residues: Endoribonuclease YbeY (138 aa).

3 residues coordinate Zn(2+): His98, His102, and His108.

It belongs to the endoribonuclease YbeY family. Zn(2+) serves as cofactor.

It is found in the cytoplasm. Functionally, single strand-specific metallo-endoribonuclease involved in late-stage 70S ribosome quality control and in maturation of the 3' terminus of the 16S rRNA. The polypeptide is Endoribonuclease YbeY (Thermosipho melanesiensis (strain DSM 12029 / CIP 104789 / BI429)).